A 208-amino-acid chain; its full sequence is Uracil phosphoribosyltransferase (208 aa).

5-phospho-alpha-D-ribose 1-diphosphate-binding positions include R78, R103, and 130–138 (DPMLATGGS). Uracil-binding positions include I193 and 198–200 (GDA). D199 contacts 5-phospho-alpha-D-ribose 1-diphosphate.

This sequence belongs to the UPRTase family. The cofactor is Mg(2+).

The enzyme catalyses UMP + diphosphate = 5-phospho-alpha-D-ribose 1-diphosphate + uracil. It participates in pyrimidine metabolism; UMP biosynthesis via salvage pathway; UMP from uracil: step 1/1. With respect to regulation, allosterically activated by GTP. Functionally, catalyzes the conversion of uracil and 5-phospho-alpha-D-ribose 1-diphosphate (PRPP) to UMP and diphosphate. This is Uracil phosphoribosyltransferase from Salmonella agona (strain SL483).